The sequence spans 703 residues: Protein teflon (703 aa).

The C2H2-type 1 zinc-finger motif lies at 32 to 55 (MFCHFCKDIFTHLPEFMRHLQWSH). 3 disordered regions span residues 78–111 (TSED…PGSS), 138–161 (SHEQ…ARKP), and 339–434 (SQQP…SKLE). 2 stretches are compositionally biased toward polar residues: residues 84–94 (QSQANSCSSGD) and 138–147 (SHEQSYSKTP). Residues 148-161 (PDSRTEGFRCARKP) show a composition bias toward basic and acidic residues. Polar residues-rich tracts occupy residues 339-352 (SQQP…NNAV) and 364-373 (SLTVISSSPI). C2H2-type zinc fingers lie at residues 649–672 (YFCE…QSVH) and 677–700 (FTCS…KTVH).

The protein belongs to the Teflon family.

It is found in the nucleus. It localises to the chromosome. Specifically required in males for proper segregation of autosomal bivalents at meiosis I. Expression is required in the male germ line prior to spermatocyte stage S4. May have a role as a bridging molecule maintaining adhesion to hold autosome bivalents together via heterochromatic connections. In Drosophila pseudoobscura pseudoobscura (Fruit fly), this protein is Protein teflon.